Here is a 573-residue protein sequence, read N- to C-terminus: MVVGLSPRRLGTLRRMAVDRRTKSPRRTPARQRTNRTLGRALVRWATTTDHKVIGHLYLATSFGFFLLGGVLAMLMRSELARPGLQLFSNEQYNQLFTVHGTIMMLLFATPLFAGFTNVIMPLQIGAPDLAFPRLNALSYWMYLFGGLMVVSGFLTPGGAASFGWFAYAPLNSATFSPGPGGDLWTMGLVVSGVSTTLSAVNFISTIICLRAPGMTMFRMPIFTWNILFTSILVLPAFPVLTAALLMLEADRKFGAHVFDAANGGALLWQHLFWFFGHPEVYIVALPFFGIVTEIIPVFSRKPIFGYVSLVGATIAITFLSAVVWAHHMFATGAVLLPFFSLMSFLIAVPTGVKFFNWIGTMIRGSLSFETPMLWACGFLVTFLLGGMSGVLIASPPLDFHLTDSYFIVAHLHYVLFGTVVFAMFAGFYFWWPKFTGKLLDERLGKIHFWTLFVGFQTTFLVQHWLGEQGMPRRYADYLAADGFTTLNTISSIGAFLLGLSTLPFLYNVWRTHQYGEKVGRDDPWGYGRSLEWATSSPPPRHNFTSLPRIRSESPAFDLHHPDVTRHDQRHVQ.

The helical transmembrane segment at 53–73 threads the bilayer; it reads VIGHLYLATSFGFFLLGGVLA. His100 is a Fe(II)-heme a binding site. The next 6 membrane-spanning stretches (helical) occupy residues 103–123, 141–161, 188–208, 227–247, 272–292, and 304–324; these read IMML…IMPL, WMYL…GGAA, GLVV…STII, ILFT…ALLM, LFWF…FGIV, and IFGY…SAVV. Residues His278 and Tyr282 each contribute to the Cu cation site. The segment at residues 278 to 282 is a cross-link (1'-histidyl-3'-tyrosine (His-Tyr)); that stretch reads HPEVY. Residues His327 and His328 each contribute to the Cu cation site. The next 2 membrane-spanning stretches (helical) occupy residues 329–349 and 373–393; these read MFAT…LIAV and MLWA…GVLI. A heme a3-binding site is contributed by His411. 3 helical membrane-spanning segments follow: residues 412–432, 447–467, and 490–510; these read LHYV…YFWW, IHFW…HWLG, and ISSI…YNVW. A Fe(II)-heme a-binding site is contributed by His413.

The protein belongs to the heme-copper respiratory oxidase family. As to quaternary structure, associates with subunits II, III and IV to form cytochrome c oxidase. It depends on Cu(2+) as a cofactor. The cofactor is heme.

The protein resides in the cell membrane. The enzyme catalyses 4 Fe(II)-[cytochrome c] + O2 + 8 H(+)(in) = 4 Fe(III)-[cytochrome c] + 2 H2O + 4 H(+)(out). It functions in the pathway energy metabolism; oxidative phosphorylation. Functionally, cytochrome c oxidase is the component of the respiratory chain that catalyzes the reduction of oxygen to water. Subunits 1-3 form the functional core of the enzyme complex. CO I is the catalytic subunit of the enzyme. Electrons originating in cytochrome c are transferred via the copper A center of subunit 2 and heme A of subunit 1 to the bimetallic center formed by heme A3 and copper B. The chain is Putative cytochrome c oxidase subunit 1-beta (ctaD2) from Streptomyces coelicolor (strain ATCC BAA-471 / A3(2) / M145).